A 190-amino-acid polypeptide reads, in one-letter code: Orotate phosphoribosyltransferase (190 aa).

5-phospho-alpha-D-ribose 1-diphosphate is bound at residue 114–122; it reads EDVITTGGS. Orotate contacts are provided by Thr118 and Arg146.

Belongs to the purine/pyrimidine phosphoribosyltransferase family. PyrE subfamily. As to quaternary structure, homodimer. Mg(2+) is required as a cofactor.

It catalyses the reaction orotidine 5'-phosphate + diphosphate = orotate + 5-phospho-alpha-D-ribose 1-diphosphate. The protein operates within pyrimidine metabolism; UMP biosynthesis via de novo pathway; UMP from orotate: step 1/2. Catalyzes the transfer of a ribosyl phosphate group from 5-phosphoribose 1-diphosphate to orotate, leading to the formation of orotidine monophosphate (OMP). This chain is Orotate phosphoribosyltransferase, found in Pelotomaculum thermopropionicum (strain DSM 13744 / JCM 10971 / SI).